The following is an 88-amino-acid chain: MSKLFFVAFLCLIISVFATTPDEIGCTDISQAEFDEKNANCIKCGEEGFGEEMVKRCRNKCFTDNFYQSCVDQLNGVYEEKDTPPVKE.

The signal sequence occupies residues 1-18 (MSKLFFVAFLCLIISVFA).

This sequence belongs to the arthropod CHH/MIH/GIH/VIH hormone family. Expressed by the venom gland.

It is found in the secreted. Functionally, may increase the toxicity of alpha-latrotoxin and/or other venom components. Is non-toxic to mice and to the cockroach Periplaneta americana. This Latrodectus hesperus (Western black widow spider) protein is Alpha-latrotoxin associated low molecular weight protein.